A 2144-amino-acid polypeptide reads, in one-letter code: Polyketide synthase-like protein Preu9 (2144 aa).

Positions 1 to 250 (MYALHLAVNA…GANAHCIIDH (250 aa)) constitute a Ketosynthase family 3 (KS3) domain. Residues 276 to 325 (QNGHLNEFAANGTTNAPSRDHRNGITDGRADGNTNGHPNANGDVGGNPIN) form a disordered region. Over residues 293–305 (SRDHRNGITDGRA) the composition is skewed to basic and acidic residues. The malonyl-CoA:ACP transacylase (MAT) stretch occupies residues 435–738 (FVFTGQGAQW…KSPVEQILKS (304 aa)). Residues 827 to 965 (HDLLGSKVVG…GCVKLIIKSS (139 aa)) form an N-terminal hotdog fold region. The segment at 827 to 1137 (HDLLGSKVVG…ERLRCVSYSR (311 aa)) is dehydratase (DH) domain. Positions 827 to 1141 (HDLLGSKVVG…CVSYSRISSD (315 aa)) constitute a PKS/mFAS DH domain. His859 (proton acceptor; for dehydratase activity) is an active-site residue. The tract at residues 979–1141 (TLRPVDVRAW…CVSYSRISSD (163 aa)) is C-terminal hotdog fold. The active-site Proton donor; for dehydratase activity is Asp1050. A methyltransferase (MT) domain region spans residues 1305 to 1494 (TGIYPQLHRI…GLDVVLDDFP (190 aa)). An enoyl reductase (ER) domain region spans residues 1731 to 2042 (GVPNSLCFAS…LANMIGKLVV (312 aa)).

Functionally, polyketide synthase-like protein that lacks important domains such as carrier domain and does probably not function as a polyketide synthase. The protein is Polyketide synthase-like protein Preu9 of Preussia isomera (Coprophilous fungus).